The primary structure comprises 203 residues: Ras-related protein Rab-24 (203 aa).

Phosphotyrosine is present on Y17. G19, K20, T21, and T40 together coordinate GTP. Mg(2+) contacts are provided by T21, T40, and D63. Positions 30–45 (DRFLVGPYQNTIGAAF) are switch I. The switch II stretch occupies residues 63-80 (DTAGSERYEAMSRIYYRG). Residues G66, K121, D123, and K156 each coordinate GTP. Y172 is subject to Phosphotyrosine. S-geranylgeranyl cysteine attachment occurs at residues C200 and C201.

The protein belongs to the small GTPase superfamily. Rab family. As to quaternary structure, interacts with ZFYVE20. Does not interact with the GDP dissociation inhibitors ARHGDIA and ARHGDIB. Requires Mg(2+) as cofactor. In terms of processing, prenylated; prenylation is required for RAB24 localization to autophagosomes. Isoprenylation is inefficient compared to other Rab family members. Post-translationally, phosphorylated at Tyr-17 and Tyr-172. Cytosolic pool of RAB24 is more phosphorylated than the membrane-associated pool. Widely expressed, with highest expression in brain.

It localises to the cytoplasm. The protein resides in the cytosol. The protein localises to the membrane. Its subcellular location is the cytoplasmic vesicle. It is found in the autophagosome membrane. It localises to the perinuclear region. The protein resides in the cytoskeleton. The protein localises to the spindle. The enzyme catalyses GTP + H2O = GDP + phosphate + H(+). With respect to regulation, regulated by guanine nucleotide exchange factors (GEFs) which promote the exchange of bound GDP for free GTP. Regulated by GTPase activating proteins (GAPs) which increase the GTP hydrolysis activity. Inhibited by GDP dissociation inhibitors (GDIs). Its function is as follows. The small GTPases Rab are key regulators of intracellular membrane trafficking, from the formation of transport vesicles to their fusion with membranes. Rabs cycle between an inactive GDP-bound form and an active GTP-bound form that is able to recruit to membranes different sets of downstream effectors directly responsible for vesicle formation, movement, tethering and fusion. RAB24 is an atypical RAB protein that presents low GTPase activity and thereby exists predominantly in the GTP-bound active state. RAB24 is required for the clearance of late autophagic vacuoles under basal conditions. It is not needed for starvation-induced autophagy. Involved in the modulation of meiotic apparatus assembly and meiotic progression during oocyte maturation, possibly through regulation of kinetochore-microtubule interaction. The sequence is that of Ras-related protein Rab-24 from Mus musculus (Mouse).